The sequence spans 166 residues: Large ribosomal subunit protein uL10 (166 aa).

The protein belongs to the universal ribosomal protein uL10 family. Part of the ribosomal stalk of the 50S ribosomal subunit. The N-terminus interacts with L11 and the large rRNA to form the base of the stalk. The C-terminus forms an elongated spine to which L12 dimers bind in a sequential fashion forming a multimeric L10(L12)X complex.

Its function is as follows. Forms part of the ribosomal stalk, playing a central role in the interaction of the ribosome with GTP-bound translation factors. This Streptococcus agalactiae serotype III (strain NEM316) protein is Large ribosomal subunit protein uL10.